The sequence spans 56 residues: Large ribosomal subunit protein eL37 (56 aa).

Cysteine 19, cysteine 22, cysteine 34, and cysteine 37 together coordinate Zn(2+). The segment at 19 to 37 (CRRCGSVSLNVHTKQCTSC) adopts a C4-type zinc-finger fold.

This sequence belongs to the eukaryotic ribosomal protein eL37 family. Requires Zn(2+) as cofactor.

Its function is as follows. Binds to the 23S rRNA. The protein is Large ribosomal subunit protein eL37 of Methanosarcina mazei (strain ATCC BAA-159 / DSM 3647 / Goe1 / Go1 / JCM 11833 / OCM 88) (Methanosarcina frisia).